A 914-amino-acid polypeptide reads, in one-letter code: MSRFFTTGSDSESESSLSGEELVTKPVGGNYGKQPLLLSEDEEDTKRVVRSAKDKRFEELTNLIRTIRNAMKIRDVTKCLEEFELLGKAYGKAKSIVDKEGVPRFYIRILADLEDYLNELWEDKEGKKKMNKNNAKALSTLRQKIRKYNRDFESHITSYKQNPEQSADEDAEKNEEDSEGSSDEDEDEDGVSAATFLKKKSEAPSGESRKFLKKMDDEDEDSEDSEDDEDWDTGSTSSDSDSEEEEGKQTALASRFLKKAPTTDEDKKAAEKKREDKAKKKHDRKSKRLDEEEEEDNEGGEWERVRGGVPLVKEKPKMFAKGTEITHAVVIKKLNEILQARGKKGTDRAAQIELLQLLVQIAAENNLGEGVIVKIKFNIIASLYDYNPNLATYMKPEMWGKCLDCINELMDILFANPNIFVGENILEESENLHNADQPLRVRGCILTLVERMDEEFTKIMQNTDPHSQEYVEHLKDEAQVCAIIERVQRYLEEKGTTEEVCRIYLLRILHTYYKFDYKAHQRQLTPPEGSSKSEQDQAENEGEDSAVLMERLCKYIYAKDRTDRIRTCAILCHIYHHALHSRWYQARDLMLMSHLQDNIQHADPPVQILYNRTMVQLGICAFRQGLTKDAHNALLDIQSSGRAKELLGQGLLLRSLQERNQEQEKVERRRQVPFHLHINLELLECVYLVSAMLLEIPYMAAHESDARRRMISKQFHHQLRVGERQPLLGPPESMREHVVAASKAMKMGDWKTCHSFIINEKMNGKVWDLFPEADKVRTMLVRKIQEESLRTYLFTYSSVYDSISMETLSDMFELDLPTVHSIISKMIINEELMASLDQPTQTVVMHRTEPTAQQNLALQLAEKLGSLVENNERVFDHKQGTYGGYFRDQKDGYRKNEGYMRRGGYRQQQSQTAY.

Residues 1–44 (MSRFFTTGSDSESESSLSGEELVTKPVGGNYGKQPLLLSEDEED) form a disordered region. A compositionally biased stretch (low complexity) spans 8–21 (GSDSESESSLSGEE). 7 positions are modified to phosphoserine: S9, S11, S13, S15, S16, S18, and S39. K99 bears the N6-acetyllysine mark. Disordered stretches follow at residues 157 to 302 (TSYK…GGEW) and 523 to 543 (QLTP…NEGE). Residues S166, S178, S181, and S182 each carry the phosphoserine modification. Residues 166–190 (SADEDAEKNEEDSEGSSDEDEDEDG) show a composition bias toward acidic residues. The segment covering 199–216 (KKSEAPSGESRKFLKKMD) has biased composition (basic and acidic residues). Positions 217–232 (DEDEDSEDSEDDEDWD) are enriched in acidic residues. Basic and acidic residues predominate over residues 261–278 (PTTDEDKKAAEKKREDKA). The segment covering 291–300 (EEEEEDNEGG) has biased composition (acidic residues). A compositionally biased stretch (polar residues) spans 523-532 (QLTPPEGSSK). Position 525 is a phosphothreonine (T525). K644 is modified (N6-acetyllysine). The PCI domain occupies 674–850 (FHLHINLELL…QTVVMHRTEP (177 aa)). The segment at 886 to 914 (FRDQKDGYRKNEGYMRRGGYRQQQSQTAY) is disordered. The span at 887–900 (RDQKDGYRKNEGYM) shows a compositional bias: basic and acidic residues. Position 910 is a phosphoserine (S910).

Belongs to the eIF-3 subunit C family. In terms of assembly, component of the eukaryotic translation initiation factor 3 (eIF-3) complex, which is composed of 13 subunits: EIF3A, EIF3B, EIF3C, EIF3D, EIF3E, EIF3F, EIF3G, EIF3H, EIF3I, EIF3J, EIF3K, EIF3L and EIF3M. The eIF-3 complex appears to include 3 stable modules: module A is composed of EIF3A, EIF3B, EIF3G and EIF3I; module B is composed of EIF3F, EIF3H, and EIF3M; and module C is composed of EIF3C, EIF3D, EIF3E, EIF3K and EIF3L. EIF3C of module C binds EIF3B of module A and EIF3H of module B, thereby linking the three modules. EIF3J is a labile subunit that binds to the eIF-3 complex via EIF3B. The eIF-3 complex interacts with RPS6KB1 under conditions of nutrient depletion. Mitogenic stimulation leads to binding and activation of a complex composed of MTOR and RPTOR, leading to phosphorylation and release of RPS6KB1 and binding of EIF4B to eIF-3. In terms of processing, phosphorylated. Phosphorylation is enhanced upon serum stimulation.

Its subcellular location is the cytoplasm. In terms of biological role, component of the eukaryotic translation initiation factor 3 (eIF-3) complex, which is required for several steps in the initiation of protein synthesis. The eIF-3 complex associates with the 40S ribosome and facilitates the recruitment of eIF-1, eIF-1A, eIF-2:GTP:methionyl-tRNAi and eIF-5 to form the 43S pre-initiation complex (43S PIC). The eIF-3 complex stimulates mRNA recruitment to the 43S PIC and scanning of the mRNA for AUG recognition. The eIF-3 complex is also required for disassembly and recycling of post-termination ribosomal complexes and subsequently prevents premature joining of the 40S and 60S ribosomal subunits prior to initiation. The eIF-3 complex specifically targets and initiates translation of a subset of mRNAs involved in cell proliferation, including cell cycling, differentiation and apoptosis, and uses different modes of RNA stem-loop binding to exert either translational activation or repression. The polypeptide is Eukaryotic translation initiation factor 3 subunit C-like protein (EIF3CL) (Homo sapiens (Human)).